The chain runs to 936 residues: Isoleucine--tRNA ligase (936 aa).

Positions 58 to 68 match the 'HIGH' region motif; the sequence is PYANGNIHIGH. Glu560 provides a ligand contact to L-isoleucyl-5'-AMP. The 'KMSKS' region signature appears at 601–605; the sequence is KMSKS. Lys604 provides a ligand contact to ATP. The Zn(2+) site is built by Cys899, Cys902, Cys919, and Cys922.

This sequence belongs to the class-I aminoacyl-tRNA synthetase family. IleS type 1 subfamily. In terms of assembly, monomer. Zn(2+) is required as a cofactor.

It is found in the cytoplasm. It carries out the reaction tRNA(Ile) + L-isoleucine + ATP = L-isoleucyl-tRNA(Ile) + AMP + diphosphate. Catalyzes the attachment of isoleucine to tRNA(Ile). As IleRS can inadvertently accommodate and process structurally similar amino acids such as valine, to avoid such errors it has two additional distinct tRNA(Ile)-dependent editing activities. One activity is designated as 'pretransfer' editing and involves the hydrolysis of activated Val-AMP. The other activity is designated 'posttransfer' editing and involves deacylation of mischarged Val-tRNA(Ile). This chain is Isoleucine--tRNA ligase, found in Proteus mirabilis (strain HI4320).